The chain runs to 256 residues: Type III pantothenate kinase (256 aa).

ATP is bound at residue 6–13 (DVGNSNIV). Substrate-binding positions include tyrosine 100 and 107–110 (GADR). The active-site Proton acceptor is aspartate 109. Aspartate 129 serves as a coordination point for K(+). Threonine 132 serves as a coordination point for ATP. Threonine 184 contributes to the substrate binding site.

This sequence belongs to the type III pantothenate kinase family. Homodimer. Requires NH4(+) as cofactor. K(+) serves as cofactor.

Its subcellular location is the cytoplasm. The enzyme catalyses (R)-pantothenate + ATP = (R)-4'-phosphopantothenate + ADP + H(+). It participates in cofactor biosynthesis; coenzyme A biosynthesis; CoA from (R)-pantothenate: step 1/5. Functionally, catalyzes the phosphorylation of pantothenate (Pan), the first step in CoA biosynthesis. The sequence is that of Type III pantothenate kinase from Geotalea daltonii (strain DSM 22248 / JCM 15807 / FRC-32) (Geobacter daltonii).